The chain runs to 156 residues: Small ribosomal subunit protein uS7 (156 aa).

The protein belongs to the universal ribosomal protein uS7 family. Part of the 30S ribosomal subunit. Contacts proteins S9 and S11.

In terms of biological role, one of the primary rRNA binding proteins, it binds directly to 16S rRNA where it nucleates assembly of the head domain of the 30S subunit. Is located at the subunit interface close to the decoding center, probably blocks exit of the E-site tRNA. This is Small ribosomal subunit protein uS7 from Aliivibrio salmonicida (strain LFI1238) (Vibrio salmonicida (strain LFI1238)).